The chain runs to 337 residues: MVVKVGINGFGRIGRIVFRNAVEHPEVEIVAVNDPFIETHYAAYMLKYDSTHGRFKGDVKFSENGLDVDGKHVRFYQERDPANIPWAETGADYVIESTGVFTTTEKASAHLKGGAKKVIISAPSADAPMFVMGVNNETYKSDIKVLSNASCTTNCLAPLAKVVNDNFGLVEGLMTTVHSYTATQKTVDGPSSKDWRGGRTAAQNIIPSSTGAAKAVGKVIPSLNGKLTGMSMRVPTSNVSVVDLTCRTDKSVTYDQIKEAMKKASANELKGIMSYSEDALVSSDLNGDPHSCIFDATAGIALNDHFIKLVAWYDNEWGYSRRVIDLIAYIAGVDAGK.

NAD(+) is bound by residues arginine 12–isoleucine 13, aspartate 34, and arginine 79. D-glyceraldehyde 3-phosphate is bound by residues serine 150–threonine 152, threonine 181, threonine 210–glycine 211, and arginine 233. Cysteine 151 acts as the Nucleophile in catalysis. Residue asparagine 315 coordinates NAD(+).

Belongs to the glyceraldehyde-3-phosphate dehydrogenase family. In terms of assembly, homotetramer.

Its subcellular location is the cytoplasm. It carries out the reaction D-glyceraldehyde 3-phosphate + phosphate + NAD(+) = (2R)-3-phospho-glyceroyl phosphate + NADH + H(+). Its pathway is carbohydrate degradation; glycolysis; pyruvate from D-glyceraldehyde 3-phosphate: step 1/5. The sequence is that of Glyceraldehyde-3-phosphate dehydrogenase (GPD) from Coccidioides posadasii (strain C735) (Valley fever fungus).